Reading from the N-terminus, the 644-residue chain is Core protein VP4 (644 aa).

The protein belongs to the orbivirus VP4 family.

It localises to the virion. The VP4 protein is one of the five proteins (with VP1, VP3, VP6 and VP7) which form the inner capsid of the virus. The protein is Core protein VP4 (Segment-4) of Bluetongue virus 11 (isolate USA) (BTV 11).